Reading from the N-terminus, the 168-residue chain is Cyclin-dependent kinase 4 inhibitor C (168 aa).

ANK repeat units lie at residues 4–33 (PWGN…NVNA), 37–65 (FGRT…NPNL), 69–98 (TGFA…DVNI), 102–132 (EGNL…NVGH), and 136–165 (KGDT…GGAT).

It belongs to the CDKN2 cyclin-dependent kinase inhibitor family. As to quaternary structure, heterodimer of p18 with CDK6.

In terms of biological role, interacts strongly with CDK6, weakly with CDK4. Inhibits cell growth and proliferation with a correlated dependence on endogenous retinoblastoma protein RB. In Mus musculus (Mouse), this protein is Cyclin-dependent kinase 4 inhibitor C (Cdkn2c).